We begin with the raw amino-acid sequence, 365 residues long: L-lactate oxidase (365 aa).

The FMN hydroxy acid dehydrogenase domain occupies 2-365 (TAISSPINLF…QDIDTSFLHL (364 aa)). Y28 is a pyruvate binding site. FMN is bound by residues 81–83 (PMA), S110, and Q135. A pyruvate-binding site is contributed by Y137. FMN is bound at residue T163. R172 contributes to the pyruvate binding site. FMN-binding residues include K239 and S261. Pyruvate-binding residues include H263 and R266. Catalysis depends on H263, which acts as the Proton acceptor. FMN-binding positions include 294–298 (DGGIR) and R318.

This sequence belongs to the FMN-dependent alpha-hydroxy acid dehydrogenase family. Homotetramer. It depends on FMN as a cofactor.

The catalysed reaction is (S)-lactate + O2 = pyruvate + H2O2. It catalyses the reaction glyoxylate + O2 + H2O = oxalate + H2O2 + H(+). Functionally, catalyzes the oxidation of (S)-lactate (L-lactate) to pyruvate, with a reduction of O2 to H2O2. In extant N2-fixing cyanobacteria such as Nostoc, this enzyme primarily serves as an O2-scavenging enzyme, protecting nitrogenase that is extremely sensitive to O2, and is therefore an essential partner in N2 fixation. Also shows clear oxidase activity with glyoxylate in vitro, and low activity with glycerate, hydroxypyruvate and glycolate. The very low glycolate oxidase activity indicates that this enzyme is unlikely to be involved in photorespiratory glycolate metabolism, a pathway that seems to exist in this cyanobacterium, but in which the oxidation of glycolate is taken over by glycolate dehydrogenase (GlcD). Is not able to use D-lactate as substrate and does not show any dehydrogenase activity with NAD(+) or NADP(+). This Nostoc sp. (strain PCC 7120 / SAG 25.82 / UTEX 2576) protein is L-lactate oxidase.